Consider the following 122-residue polypeptide: Large ribosomal subunit protein uL14 (122 aa).

It belongs to the universal ribosomal protein uL14 family. As to quaternary structure, part of the 50S ribosomal subunit. Forms a cluster with proteins L3 and L19. In the 70S ribosome, L14 and L19 interact and together make contacts with the 16S rRNA in bridges B5 and B8.

Binds to 23S rRNA. Forms part of two intersubunit bridges in the 70S ribosome. The protein is Large ribosomal subunit protein uL14 of Borrelia hermsii (strain HS1 / DAH).